Here is a 430-residue protein sequence, read N- to C-terminus: MFRTISNIFRVGDLRRKVIFTLLMLIVFRIGSFIPVPGTNREVLDFVDQANAFGFLNTFGGGALGNFSIFAMGIMPYITASIVMQLLQMDVVPKFAEWAKEGEAGRRKLAQFTRYGTIVLGFIQALGMSVGFNNFFPGLIPNPSVSVYLFIALVLTAGTAFLMWLGEQITAKGVGNGISIIIFAGIAAGIPNGLNLIYSTRIQDAGEQLFLNIVVILLLALAILAIIVGVIFVQQALRKIPVQYAKRLVGRNPVGGQSTHLPLKVNAAGVIPVIFALSLFIFPPTVAGLFGSDHPVAAWVIETFDYTHPIGMAVYALLIIGFTYFYTFIQVNPERMAENLKKQGGYIPGIRPGKATQTYITRILYRLTFVGSLFLAVVAILPVFFIKFADLPQAIQIGGTGLLIVVGVALDTMKQIEAQLIKRSYKGFIK.

10 helical membrane passes run 18 to 38 (VIFT…PVPG), 67 to 87 (FSIF…MQLL), 118 to 138 (IVLG…FFPG), 145 to 165 (VSVY…LMWL), 177 to 197 (GISI…LNLI), 213 to 233 (IVVI…VIFV), 270 to 290 (VIPV…AGLF), 309 to 329 (PIGM…YTFI), 369 to 389 (FVGS…IKFA), and 390 to 410 (DLPQ…GVAL).

It belongs to the SecY/SEC61-alpha family. As to quaternary structure, component of the Sec protein translocase complex. Heterotrimer consisting of SecY, SecE and SecG subunits. The heterotrimers can form oligomers, although 1 heterotrimer is thought to be able to translocate proteins. Interacts with the ribosome. Interacts with SecDF, and other proteins may be involved. Interacts with SecA.

Its subcellular location is the cell membrane. Its function is as follows. The central subunit of the protein translocation channel SecYEG. Consists of two halves formed by TMs 1-5 and 6-10. These two domains form a lateral gate at the front which open onto the bilayer between TMs 2 and 7, and are clamped together by SecE at the back. The channel is closed by both a pore ring composed of hydrophobic SecY resides and a short helix (helix 2A) on the extracellular side of the membrane which forms a plug. The plug probably moves laterally to allow the channel to open. The ring and the pore may move independently. The sequence is that of Protein translocase subunit SecY from Halalkalibacterium halodurans (strain ATCC BAA-125 / DSM 18197 / FERM 7344 / JCM 9153 / C-125) (Bacillus halodurans).